We begin with the raw amino-acid sequence, 1235 residues long: UPF0507 protein DEHA2G04334g (1235 aa).

The VPS9 domain occupies Q323–Q487. The disordered stretch occupies residues S1097–N1124. Over residues E1100 to A1115 the composition is skewed to low complexity.

This sequence belongs to the UPF0507 family.

The protein is UPF0507 protein DEHA2G04334g of Debaryomyces hansenii (strain ATCC 36239 / CBS 767 / BCRC 21394 / JCM 1990 / NBRC 0083 / IGC 2968) (Yeast).